Reading from the N-terminus, the 302-residue chain is ATP synthase gamma chain, sodium ion specific (302 aa).

The protein belongs to the ATPase gamma chain family. As to quaternary structure, F-type ATPases have 2 components, CF(1) - the catalytic core - and CF(0) - the membrane proton channel. CF(1) has five subunits: alpha(3), beta(3), gamma(1), delta(1), epsilon(1). CF(0) has three main subunits: a, b and c.

The protein resides in the cell membrane. With respect to regulation, inhibited by nitrate. In terms of biological role, produces ATP from ADP in the presence of a proton gradient across the membrane. The gamma chain is believed to be important in regulating ATPase activity and the flow of protons through the CF(0) complex. This is ATP synthase gamma chain, sodium ion specific (atpG) from Acetobacterium woodii (strain ATCC 29683 / DSM 1030 / JCM 2381 / KCTC 1655 / WB1).